Consider the following 530-residue polypeptide: Portal protein B (530 aa).

The protein belongs to the siphoviridae portal protein family. Homododecamer. Interacts with the terminase complex composed of two small and one large terminase subunits. Post-translationally, proteolytically cleaved by the viral protease during capsid maturation.

Its subcellular location is the virion. In terms of biological role, forms the portal vertex of the capsid. This portal plays critical roles in head assembly, genome packaging, neck/tail attachment, and genome ejection. The portal protein multimerizes as a single ring-shaped homododecamer arranged around a central channel. Binds to the terminase subunits to form the packaging machine. The polypeptide is Portal protein B (Enterobacteria phage P21 (Bacteriophage 21)).